The primary structure comprises 335 residues: Anthranilate phosphoribosyltransferase (335 aa).

5-phospho-alpha-D-ribose 1-diphosphate contacts are provided by residues G79, 82–83 (GD), T87, 89–92 (NVST), 107–115 (KHCNKGVSS), and S119. Position 79 (G79) interacts with anthranilate. Residue S91 coordinates Mg(2+). Residue N110 coordinates anthranilate. An anthranilate-binding site is contributed by R165. The Mg(2+) site is built by D223 and E224.

It belongs to the anthranilate phosphoribosyltransferase family. In terms of assembly, homodimer. The cofactor is Mg(2+).

It carries out the reaction N-(5-phospho-beta-D-ribosyl)anthranilate + diphosphate = 5-phospho-alpha-D-ribose 1-diphosphate + anthranilate. Its pathway is amino-acid biosynthesis; L-tryptophan biosynthesis; L-tryptophan from chorismate: step 2/5. Its function is as follows. Catalyzes the transfer of the phosphoribosyl group of 5-phosphorylribose-1-pyrophosphate (PRPP) to anthranilate to yield N-(5'-phosphoribosyl)-anthranilate (PRA). This chain is Anthranilate phosphoribosyltransferase, found in Buchnera aphidicola subsp. Schizaphis graminum (strain Sg).